Consider the following 517-residue polypeptide: Cytochrome P450 monooxygenase polD (517 aa).

A helical transmembrane segment spans residues 5–27 (VVLVGIVVLVLAYLSSTGKVYPH). C435 serves as a coordination point for heme.

It belongs to the cytochrome P450 family. The cofactor is heme.

The protein resides in the membrane. Cytochrome P450 monooxygenase; part of the gene cluster that mediates the biosynthesis of antifungal fernane-type triterpenoid polytolypin. PolD doe not seem to be involved in the biosynthesis of polytolypin. Within the pathway, the triterpene cyclase polA first catalyzes the cyclization of 2,3-oxidosqualene to motiol, polc converts the 4-alpha-methyl group of motiol to a carboxyl group, polB is responsible for appending a hydroxyl group at the 2-alpha position and polE is a dual functional P450, which can catalyze the formation of both the 1-beta-hydroxyl group and 10-beta-carboxyl group. This chain is Cytochrome P450 monooxygenase polD, found in Polytolypa hystricis (strain UAMH7299).